Here is a 692-residue protein sequence, read N- to C-terminus: A-kinase anchor protein 8 (692 aa).

The interval 1-195 (MDQGYGGYGA…FMRGRGQGRF (195 aa)) is interaction with MCM2. The interval 1 to 210 (MDQGYGGYGA…PGTFMRSDPF (210 aa)) is interaction with DPY30. Arg-109 bears the Asymmetric dimethylarginine; alternate mark. Arg-109 carries the post-translational modification Omega-N-methylarginine; alternate. The tract at residues 109–201 (RGGSGGGGEG…QGRFQDRSNP (93 aa)) is interaction with DDX5. Ser-112 bears the Phosphoserine mark. Disordered regions lie at residues 168–203 (GQYSECRDPARERGSLDGFMRGRGQGRFQDRSNPGT), 231–254 (GGRGLGGPSPSRPPPSLFSQSMAP), and 269–382 (STMP…RTRD). Residues 172–182 (ECRDPARERGS) show a composition bias toward basic and acidic residues. Phosphoserine is present on Ser-199. Residues Arg-233 and Arg-277 each carry the omega-N-methylarginine modification. Basic and acidic residues-rich tracts occupy residues 281-297 (RMRDRDRPKRRGFDRFG) and 314-323 (PDTKLARVDS). Positions 289–306 (KRRGFDRFGPDGTGRKRK) match the Bipartite nuclear localization signal motif. Lys-317 participates in a covalent cross-link: Glycyl lysine isopeptide (Lys-Gly) (interchain with G-Cter in SUMO2). Phosphoserine is present on residues Ser-323, Ser-328, and Ser-339. Residues 324–334 (EGDFSENDDAA) are compositionally biased toward acidic residues. Residues 387-450 (RIQFACSVCK…NKKIEKRRQE (64 aa)) form an involved in chromatin-binding region. 2 C2H2 AKAP95-type zinc fingers span residues 392-414 (CSVCKFRSFDDEEIQKHLQSKFH) and 481-504 (CLACDMLIPAQPQLLQRHLHSVDH). Residues 525-569 (SVLNNRHIVKMLEKYLKGEDPFTSETVDPEMEGDDNLGGEDKKET) are involved in condensin complex recruitment. The disordered stretch occupies residues 545 to 571 (PFTSETVDPEMEGDDNLGGEDKKETPE). A compositionally biased stretch (acidic residues) spans 551-562 (VDPEMEGDDNLG). Residue Lys-567 forms a Glycyl lysine isopeptide (Lys-Gly) (interchain with G-Cter in SUMO2) linkage. The RII-binding stretch occupies residues 572–589 (EVAADVLAEVITAAVRAV). Residues 576–593 (DVLAEVITAAVRAVDGEG) form a required for interaction with MYCBP region. The disordered stretch occupies residues 592 to 692 (EGAPAPESSG…AESKDAVPTE (101 aa)). Residues 634–646 (AHEKGVPKARSEA) are compositionally biased toward basic and acidic residues. Residue Ser-662 is modified to Phosphoserine. Residues 663-675 (AQTRVAPAPAAAD) are compositionally biased toward low complexity. A compositionally biased stretch (basic and acidic residues) spans 683–692 (AESKDAVPTE). Ser-685 carries the phosphoserine modification.

It belongs to the AKAP95 family. As to quaternary structure, binds to the PKA RII-alpha regulatory subunit PRKAR2A (phosphorylated at 'Thr-54') during mitosis. Interacts (via C-terminus) with FIGN. Interacts with NCAPD2, CCND1, MCM2, RPS6KA1, PDE4A. Interacts with CCND3, CCNE1, DDX5, CASP3. Interacts with NFKB1; detetcted in the cytoplasm. Interacts with MYCBP; MYCBP is translocated to the nucleus and the interaction prevents the association of the PKA catalytic subunit leading to suppression of PKA activity. Interacts with DPY30; mediating AKAP8 association with at least the MLL4/WBP7 HMT complex. Interacts with HDAC3; increased during mitosis. Interacts with GJA1; in the nucleus and in the nuclear membrane; the nuclear association increases with progress of cell cycle G1, S and G2 phase and decreases in M phase. Phosphorylated on tyrosine residues probably by SRC subfamily protein kinases; multiple phosphorylation is leading to dissociation from nuclear structures implicated in chromatin structural changes. As to expression, highly expressed in heart, liver, skeletal muscle, kidney and pancreas. Expressed in mature dendritic cells.

It is found in the nucleus. The protein resides in the nucleus matrix. Its subcellular location is the nucleolus. The protein localises to the cytoplasm. Functionally, anchoring protein that mediates the subcellular compartmentation of cAMP-dependent protein kinase (PKA type II). Acts as an anchor for a PKA-signaling complex onto mitotic chromosomes, which is required for maintenance of chromosomes in a condensed form throughout mitosis. Recruits condensin complex subunit NCAPD2 to chromosomes required for chromatin condensation; the function appears to be independent from PKA-anchoring. May help to deliver cyclin D/E to CDK4 to facilitate cell cycle progression. Required for cell cycle G2/M transition and histone deacetylation during mitosis. In mitotic cells recruits HDAC3 to the vicinity of chromatin leading to deacetylation and subsequent phosphorylation at 'Ser-10' of histone H3; in this function may act redundantly with AKAP8L. Involved in nuclear retention of RPS6KA1 upon ERK activation thus inducing cell proliferation. May be involved in regulation of DNA replication by acting as scaffold for MCM2. Enhances HMT activity of the KMT2 family MLL4/WBP7 complex and is involved in transcriptional regulation. In a teratocarcinoma cell line is involved in retinoic acid-mediated induction of developmental genes implicating H3 'Lys-4' methylation. May be involved in recruitment of active CASP3 to the nucleus in apoptotic cells. May act as a carrier protein of GJA1 for its transport to the nucleus. May play a repressive role in the regulation of rDNA transcription. Preferentially binds GC-rich DNA in vitro. In cells, associates with ribosomal RNA (rRNA) chromatin, preferentially with rRNA promoter and transcribed regions. Involved in modulation of Toll-like receptor signaling. Required for the cAMP-dependent suppression of TNF-alpha in early stages of LPS-induced macrophage activation; the function probably implicates targeting of PKA to NFKB1. This is A-kinase anchor protein 8 (AKAP8) from Homo sapiens (Human).